The primary structure comprises 345 residues: Succinylglutamate desuccinylase (345 aa).

3 residues coordinate Zn(2+): His-64, Glu-67, and His-161. The active site involves Glu-225.

This sequence belongs to the AspA/AstE family. Succinylglutamate desuccinylase subfamily. Zn(2+) is required as a cofactor.

It catalyses the reaction N-succinyl-L-glutamate + H2O = L-glutamate + succinate. It participates in amino-acid degradation; L-arginine degradation via AST pathway; L-glutamate and succinate from L-arginine: step 5/5. In terms of biological role, transforms N(2)-succinylglutamate into succinate and glutamate. In Shewanella piezotolerans (strain WP3 / JCM 13877), this protein is Succinylglutamate desuccinylase.